A 273-amino-acid chain; its full sequence is Zinc finger protein 80 (273 aa).

7 consecutive C2H2-type zinc fingers follow at residues 49-71 (YKCK…QQIH), 77-99 (YECQ…VRIH), 103-127 (KPCK…HQIH), 133-155 (YECS…RMTH), 161-183 (FGCK…MKIH), 189-211 (YKCS…SMTH), and 217-239 (YECK…TRSH).

The protein belongs to the krueppel C2H2-type zinc-finger protein family.

Its subcellular location is the nucleus. Its function is as follows. May be involved in transcriptional regulation. In Pongo pygmaeus (Bornean orangutan), this protein is Zinc finger protein 80 (ZNF80).